Reading from the N-terminus, the 289-residue chain is Shikimate dehydrogenase (NADP(+)) (289 aa).

Residues 20 to 22 (SIS) and serine 67 each bind shikimate. Lysine 71 serves as the catalytic Proton acceptor. 2 residues coordinate shikimate: asparagine 92 and aspartate 107. NADP(+) is bound by residues 132–136 (GGGGA) and valine 230. Shikimate is bound at residue tyrosine 232. Glycine 253 is a binding site for NADP(+).

The protein belongs to the shikimate dehydrogenase family. Homodimer.

It catalyses the reaction shikimate + NADP(+) = 3-dehydroshikimate + NADPH + H(+). It functions in the pathway metabolic intermediate biosynthesis; chorismate biosynthesis; chorismate from D-erythrose 4-phosphate and phosphoenolpyruvate: step 4/7. Its function is as follows. Involved in the biosynthesis of the chorismate, which leads to the biosynthesis of aromatic amino acids. Catalyzes the reversible NADPH linked reduction of 3-dehydroshikimate (DHSA) to yield shikimate (SA). This is Shikimate dehydrogenase (NADP(+)) from Streptococcus mutans serotype c (strain ATCC 700610 / UA159).